We begin with the raw amino-acid sequence, 853 residues long: DNA mismatch repair protein MutS (853 aa).

Residue 614–621 (GPNMGGKS) participates in ATP binding.

It belongs to the DNA mismatch repair MutS family.

Functionally, this protein is involved in the repair of mismatches in DNA. It is possible that it carries out the mismatch recognition step. This protein has a weak ATPase activity. In Escherichia coli O6:H1 (strain CFT073 / ATCC 700928 / UPEC), this protein is DNA mismatch repair protein MutS.